The chain runs to 419 residues: Altered inheritance of mitochondria protein 6 (419 aa).

Positions 1-31 are cleaved as a signal peptide; the sequence is MLPPFIVAGLFSSYILIMGLMFSQISHVSNS.

The protein belongs to the AIM6 family.

In Kluyveromyces lactis (strain ATCC 8585 / CBS 2359 / DSM 70799 / NBRC 1267 / NRRL Y-1140 / WM37) (Yeast), this protein is Altered inheritance of mitochondria protein 6 (AIM6).